Here is a 468-residue protein sequence, read N- to C-terminus: Chromatin assembly factor 1 subunit B (468 aa).

WD repeat units follow at residues His-11–Asn-52, His-69–Glu-108, Thr-143–Gly-182, Asp-185–Val-224, and Ile-371–Glu-413.

This sequence belongs to the WD repeat HIR1 family. In terms of assembly, component of chromatin assembly factor 1 (CAF-1), composed of MSI1/p50, CAC2/p60 and CAC1/p90. Interacts with RTT106.

It localises to the nucleus. Its function is as follows. Acts as a component of the histone chaperone complex chromatin assembly factor 1 (CAF-1), which assembles histone octamers onto replicating DNA. It performs the first step of the nucleosome assembly process, bringing newly synthesized histones H3 and H4 to replicating DNA; histones H2A/H2B can bind to this chromatin precursor subsequent to DNA replication to complete the histone octamer. Plays a role in the maintenance of heterochromatin. This Saccharomyces cerevisiae (strain ATCC 204508 / S288c) (Baker's yeast) protein is Chromatin assembly factor 1 subunit B (CAC2).